Here is a 352-residue protein sequence, read N- to C-terminus: Sulfate-binding protein (352 aa).

The first 40 residues, 1–40, serve as a signal peptide directing secretion; the sequence is MARSAFGWGFSVIAVLMVGSITACNTTTTTEPGQGENASQ.

Belongs to the prokaryotic sulfate-binding protein family.

The protein resides in the periplasm. In terms of biological role, this protein specifically binds sulfate and is involved in its transmembrane transport. This chain is Sulfate-binding protein (sbpA), found in Synechocystis sp. (strain ATCC 27184 / PCC 6803 / Kazusa).